Here is a 312-residue protein sequence, read N- to C-terminus: Olfactory receptor 1D2 (312 aa).

Topologically, residues 1 to 25 (MDGGNQSEGSEFLLLGMSESPEQQR) are extracellular. An N-linked (GlcNAc...) asparagine glycan is attached at Asn-5. A helical transmembrane segment spans residues 26-49 (ILFWMFLSMYLVTVVGNVLIILAI). Topologically, residues 50-57 (SSDSRLHT) are cytoplasmic. A helical transmembrane segment spans residues 58 to 79 (PVYFFLANLSFTDLFFVTNTIP). Residues 80 to 100 (KMLVNLQSHNKAISYAGCLTQ) are Extracellular-facing. Cys-97 and Cys-189 are joined by a disulfide. A helical membrane pass occupies residues 101 to 120 (LYFLVSLVALDNLILAVMAY). At 121 to 139 (DRYVAICCPLHYTTAMSPK) the chain is on the cytoplasmic side. A helical transmembrane segment spans residues 140 to 158 (LCILLLSLCWVLSVLYGLI). Topologically, residues 159-196 (HTLLMTRVTFCGSRKIHYIFCEMYVLLRMACSNIQINH) are extracellular. N-linked (GlcNAc...) asparagine glycosylation occurs at Asn-195. The chain crosses the membrane as a helical span at residues 197-219 (TVLIATGCFIFLIPFGFVIISYV). The Cytoplasmic portion of the chain corresponds to 220 to 236 (LIIRAILRIPSVSKKYK). Residues 237 to 259 (AFSTCASHLGAVSLFYGTLCMVY) traverse the membrane as a helical segment. Topologically, residues 260 to 271 (LKPLHTYSVKDS) are extracellular. The chain crosses the membrane as a helical span at residues 272–291 (VATVMYAVVTPMMNPFIYSL). At 292-312 (RNKDMHGALGRLLDKHFKRLT) the chain is on the cytoplasmic side.

The protein belongs to the G-protein coupled receptor 1 family. In terms of tissue distribution, expressed in testis. Expressed in spermatozoa (at protein level). Expressed in olfactory epithelium.

It localises to the cell membrane. Its function is as follows. Odorant receptor which may be involved in sperm chemotaxis. Bourgeonal is a strong chemoattractant for sperm in vitro and is shown to be a strong agonist for OR1D2 in vitro. May also function in olfactory reception. This is Olfactory receptor 1D2 (OR1D2) from Homo sapiens (Human).